The sequence spans 1749 residues: MQAMDPAAADLYEEDGKDLDFYDFEPLPTLPEDEENVSLADILSLRDRGLSEQEAWAVCLECSLSMRSVAHAAIFQSLCITPDTLAFNTSGNVCFMEQLSDDPEGAFVPPEFDVTGNTFEAHIYSLGATLKAALEYVAEPTLEPRLSQDLEALLSRMQAEDPGDRPDLESIIALCEEKLQLTSSCRVCRSLSAVGRRVLSIESFGALQDVSESSWRERPAPGNAGPRRPPGDPSTDPEVLPTPEGPESETSRGPRASPTKALLSTPVRNGESHSREGLAGLVLDAERTLGELDRDALRRSRLRKVQTFPRLLSDSPEATLCLPLTRGKSQLPISELFSPDPRKAFLDRKNGLSSFQAQPKCRLWPEQEPEHQLGRVPCAGRSTDRGPGVPGSPGQPETSHPSQGPAEAPADPRDASGEAQTPRDDERIPEGARQLESAAAEQWVSLQDLLSQLGRPFREYELWALCLACLRALQTRPEHPAYLCLDSVLVAEDGAVLFQPPPANGSYDSFFLAPELAEERLVTEKASVYCVAAVLWTAAKFSVPRNHKLALPRRLKTLLLDMARRSAPERPSAAEAIKVCGSYLLQRGMDSRKILAHLRASICQVYQEEETISLQNAFSVVELKPSVAPAPEPSPGFLPVNSDTGLVAVPGPVPGQHPCGEEATQLPAAFTSEATHFKPIVLAQNASVARDQPALAQEESEERGGQREGEGEEKLSLEAHAGSPSLKTPDGPVPGPGPQGAAPEPLGASVQRDSAQGRPCPPPQAPANQPEGASSAAPGSPVPAPPTKASALPVEQGPAEPIPPGVASGGLRPDALGPTTAHHGPRHPPKPPRSKATERPGQEPEGPGATPAGERDDQSPDSVPERPRPADRRLCLPCVDASPLPGRTACPSLQEATRLIQEEFAFDGYLDNGLEALIMGEYIFALKDLTFATFCGAISEKFCDLYWDEKLLQNLFKVVNGQASPSPSTAEEAGSQLEGSQSPRSPSSKRPSLHRLGKEKPAMARTSSRAPCSPTSVSDVDSDALSRGNFEVGFRPQRSVKAERAQQPEAGEDRRPAGGASDVEAVTRLARSKGVGPALSPGPAGFQSCSPGWCSAFYEADCFGADVHNYVKDLGRQQADGALPDAQSPELEQQLMMEKRNYRKTLKFYQKLLQKEKRNKGSDVKTMLSKLKGQLEEMKSRVQFLSLVKKYLQVMYAERWGLEPCTLPVIVNIAAAPCDTLDFSPLDESSSLIFYNVNKHPGGRQKARILQAGTPLGLMAYLYSSDAFLEGYVQQFLYTFRYFCTPHDFLHFLLDRINSTLTRAHQDPTSTFTKIYRRSLCVLQAWVEDCYAVDFPRNSGLLGKLEDFISSKILPLDGSAKHLLGLLEVGMDRRAEGNPRGTDLENPREAEEDARPFNALCKRLSEDGISRKSFPWRLPRGNGLVLPPHKERPYTIAAALPKPCFLEDFYGPCAKTSEKGPYFLTEYSTHQLFSQLTLLQQELFQKCHPVHFLNSRALGVMDKSTAIPKASSSESLSAKTCSLFLPNYVQDKYLLQLLRNADDVSTWVAAEIVTSHTSKLQVNLLSKFLLIAKSCYEQRNFATAMQILSGLEHLAVRQSPAWRILPAKIAEVMEELKAVEVFLKSDSLCLMEGRRFRAQPTLPSAHLLAMHIQQLETGGFTMTNGAHRWSKLRNIAKVVSQVHAFQENPYTFSPDPKLQSYLKQRIARFSGADISTLAADSRANFHQVSSEKHSRKIQDKLRRMKATFQ.

A KIND 1 domain is found at 37 to 217 (VSLADILSLR…QDVSESSWRE (181 aa)). 2 disordered regions span residues 210 to 275 (VSES…SHSR) and 361 to 435 (CRLW…ARQL). 2 stretches are compositionally biased toward basic and acidic residues: residues 363–373 (LWPEQEPEHQL) and 410–430 (ADPR…RIPE). One can recognise a KIND 2 domain in the interval 444–608 (VSLQDLLSQL…RASICQVYQE (165 aa)). 2 disordered regions span residues 689-871 (ARDQ…RPAD) and 962-1061 (QASP…GGAS). Residues 702-717 (ERGGQREGEGEEKLSL) show a composition bias toward basic and acidic residues. Composition is skewed to low complexity over residues 739-748 (QGAAPEPLGA) and 766-779 (PANQ…AAPG). Residues 823 to 833 (HGPRHPPKPPR) are compositionally biased toward basic residues. Over residues 853–871 (GERDDQSPDSVPERPRPAD) the composition is skewed to basic and acidic residues. Serine 964 carries the phosphoserine modification. The segment covering 980–990 (SQSPRSPSSKR) has biased composition (low complexity). The span at 1005–1019 (RTSSRAPCSPTSVSD) shows a compositional bias: polar residues. A compositionally biased stretch (basic and acidic residues) spans 1040–1056 (VKAERAQQPEAGEDRRP). A coiled-coil region spans residues 1133–1190 (QQLMMEKRNYRKTLKFYQKLLQKEKRNKGSDVKTMLSKLKGQLEEMKSRVQFLSLVKK). The 126-residue stretch at 1246–1371 (KARILQAGTP…HLLGLLEVGM (126 aa)) folds into the N-terminal Ras-GEF domain. The Ras-GEF domain maps to 1468–1719 (STHQLFSQLT…SGADISTLAA (252 aa)).

Interacts (via KIND2) with MAP2; the interaction enhances MAP2 phosphorylation and localizes KNDC1 to dendrites. Expressed specifically in the cerebral cortex.

The protein resides in the cell projection. It is found in the dendrite. The protein localises to the perikaryon. Its function is as follows. RAS-Guanine nucleotide exchange factor (GEF) that controls the negative regulation of neuronal dendrite growth by mediating a signaling pathway linking RAS and MAP2. May be involved in cellular senescence. The protein is Kinase non-catalytic C-lobe domain-containing protein 1 of Homo sapiens (Human).